We begin with the raw amino-acid sequence, 38 residues long: Large ribosomal subunit protein bL36 (38 aa).

The protein belongs to the bacterial ribosomal protein bL36 family.

The polypeptide is Large ribosomal subunit protein bL36 (Prochlorococcus marinus (strain MIT 9312)).